Here is a 534-residue protein sequence, read N- to C-terminus: Serine/threonine-protein phosphatase 2B catalytic subunit (534 aa).

The Fe cation site is built by Asp88, His90, and Asp116. Asp116 and Asn148 together coordinate Zn(2+). His149 serves as the catalytic Proton donor. The Zn(2+) site is built by His197 and His279. 2 disordered regions span residues 375–398 and 475–534; these read LEDETPTSVSPSAPSPPLPMDVES and PSHE…TREA. 2 stretches are compositionally biased toward basic and acidic residues: residues 475 to 497 and 524 to 534; these read PSHEEVIKRSEEERRAALERAQQ and QRDAARETREA.

The protein belongs to the PPP phosphatase family. PP-2B subfamily. In terms of assembly, composed of two components (A and B), the A component is the catalytic subunit and the B component confers calcium sensitivity. Fe(3+) serves as cofactor. Zn(2+) is required as a cofactor.

The catalysed reaction is O-phospho-L-seryl-[protein] + H2O = L-seryl-[protein] + phosphate. It catalyses the reaction O-phospho-L-threonyl-[protein] + H2O = L-threonyl-[protein] + phosphate. Calcium-dependent, calmodulin-stimulated protein phosphatase. This subunit may have a role in the calmodulin activation of calcineurin. This chain is Serine/threonine-protein phosphatase 2B catalytic subunit (cnaA), found in Aspergillus fumigatus (strain ATCC MYA-4609 / CBS 101355 / FGSC A1100 / Af293) (Neosartorya fumigata).